We begin with the raw amino-acid sequence, 2213 residues long: Protein sidekick-1 (2213 aa).

The interval 1-73 (MARGARPSAA…GAGRCGGRRA (73 aa)) is disordered. The span at 23 to 38 (AGPGRPRGSPPGRARP) shows a compositional bias: low complexity. Ig-like C2-type domains follow at residues 104 to 186 (PYFK…SEVQ), 191 to 277 (GSFM…SPFI), 293 to 378 (PTIV…RATA), 386 to 476 (PYFT…LDVT), and 480 to 569 (PVFT…ATLT). Residues Cys-126 and Cys-169 are joined by a disulfide bond. Residues Asn-271 and Asn-301 are each glycosylated (N-linked (GlcNAc...) asparagine). Disulfide bonds link Cys-315-Cys-362, Cys-408-Cys-458, and Cys-501-Cys-553. N-linked (GlcNAc...) asparagine glycosylation is found at Asn-550, Asn-563, and Asn-572. Residues 574–663 (TSIVHPPEDH…GNDSRMARLE (90 aa)) form the Ig-like C2-type 6 domain. A disulfide bond links Cys-595 and Cys-647. N-linked (GlcNAc...) asparagine glycosylation is found at Asn-655, Asn-679, Asn-782, Asn-821, Asn-882, Asn-1015, and Asn-1024. Fibronectin type-III domains are found at residues 670-766 (SPQN…LPEE), 771-867 (PPKN…TLQG), 872-970 (PPQN…TQED), 974-1068 (AVGH…VPPD), 1072-1171 (APSN…TLQA), 1176-1274 (APTS…TRES), 1279-1376 (APEN…TKDD), 1380-1474 (PPVR…TEKR), 1479-1576 (PPRE…TLQD), 1581-1699 (PPGS…VGEA), 1704-1800 (APQN…THQA), 1804-1899 (APSF…AGPA), and 1902-2000 (SPGS…SAQV). Asn-1282 and Asn-1333 each carry an N-linked (GlcNAc...) asparagine glycan. N-linked (GlcNAc...) asparagine glycans are attached at residues Asn-1654, Asn-1748, Asn-1767, Asn-1819, and Asn-1893. Residues 2010–2030 (FLLVMALSSLIVILLVVFALV) traverse the membrane as a helical segment. Over 2031-2213 (LHGQNKKYKN…TPLTGFSSFV (183 aa)) the chain is Cytoplasmic. A disordered region spans residues 2075–2098 (STFSKKNGTRSPPRPSPGGLHYSD). The PDZ-binding motif lies at 2207-2213 (TGFSSFV).

The protein belongs to the sidekick family. In terms of assembly, homodimer; mediates homophilic interactions to promote cell adhesion. As to expression, up-regulated in glomeruli in HIV-associated nephropathy. In diseased glomeruli, significantly overexpressed and the expression is no longer restricted to mesangial cells but includes podocytes and parietal epithelial cells.

It localises to the cell membrane. It is found in the synapse. Functionally, adhesion molecule that promotes lamina-specific synaptic connections in the retina. Expressed in specific subsets of interneurons and retinal ganglion cells (RGCs) and promotes synaptic connectivity via homophilic interactions. The polypeptide is Protein sidekick-1 (Homo sapiens (Human)).